The sequence spans 275 residues: 4-hydroxy-tetrahydrodipicolinate reductase (275 aa).

NAD(+) is bound by residues 13-18 (GAAGKM), 108-110 (GTT), and 134-137 (VPNF). His164 serves as the catalytic Proton donor/acceptor. His165 contacts (S)-2,3,4,5-tetrahydrodipicolinate. The Proton donor role is filled by Lys168. (S)-2,3,4,5-tetrahydrodipicolinate is bound at residue 174 to 175 (GT).

Belongs to the DapB family.

The protein resides in the cytoplasm. It carries out the reaction (S)-2,3,4,5-tetrahydrodipicolinate + NAD(+) + H2O = (2S,4S)-4-hydroxy-2,3,4,5-tetrahydrodipicolinate + NADH + H(+). The enzyme catalyses (S)-2,3,4,5-tetrahydrodipicolinate + NADP(+) + H2O = (2S,4S)-4-hydroxy-2,3,4,5-tetrahydrodipicolinate + NADPH + H(+). The protein operates within amino-acid biosynthesis; L-lysine biosynthesis via DAP pathway; (S)-tetrahydrodipicolinate from L-aspartate: step 4/4. Functionally, catalyzes the conversion of 4-hydroxy-tetrahydrodipicolinate (HTPA) to tetrahydrodipicolinate. This chain is 4-hydroxy-tetrahydrodipicolinate reductase, found in Gloeothece citriformis (strain PCC 7424) (Cyanothece sp. (strain PCC 7424)).